The sequence spans 74 residues: Protein A30 homolog (74 aa).

The protein belongs to the chordopoxvirinae A30 family. In terms of assembly, interacts with protein G7; the interaction stabilizes both proteins. Phosphorylated by viral F10 kinase.

Its function is as follows. Required for the association between the dense viroplasm and the viral membranes to form the mature virion (MV). This Fowlpox virus (strain NVSL) (FPV) protein is Protein A30 homolog.